The primary structure comprises 753 residues: Protein-lysine N-methyltransferase SMYD4 (753 aa).

112–114 (RSA) is a binding site for S-adenosyl-L-methionine. The region spanning 186 to 528 (DGVSVYFSSD…AGQEILHCYG (343 aa)) is the SET domain. Cys-246, Cys-249, Cys-259, Cys-262, Cys-268, Cys-272, His-281, and Cys-285 together coordinate Zn(2+). The MYND-type zinc finger occupies 246–285 (CHHCLSQSLSFVPCPKCSYARYCGESCQKDAWDQWHQWEC). S-adenosyl-L-methionine is bound by residues 467 to 468 (NH) and Tyr-527.

The protein belongs to the class V-like SAM-binding methyltransferase superfamily.

The protein resides in the nucleus. The protein localises to the cytoplasm. The catalysed reaction is L-lysyl-[protein] + S-adenosyl-L-methionine = N(6)-methyl-L-lysyl-[protein] + S-adenosyl-L-homocysteine + H(+). Its function is as follows. Protein-lysine N-methyltransferase. Monomethylates PRMT5, modulating its transcriptional activity. May also act as a histone methyltransferase. Plays a critical role in cardiac development. Acts as a key epigenetic regulator of gene expression during cardiac development via its dual activities as a methyltransferase and negative regulator of HDAC1. This is Protein-lysine N-methyltransferase SMYD4 (smyd4) from Danio rerio (Zebrafish).